We begin with the raw amino-acid sequence, 141 residues long: Small ribosomal subunit protein uS12 (141 aa).

Positions Met1–Ser11 are enriched in polar residues. Residues Met1–Pro22 are disordered. Asp102 is subject to 3-methylthioaspartic acid.

Belongs to the universal ribosomal protein uS12 family. As to quaternary structure, part of the 30S ribosomal subunit. Contacts proteins S8 and S17. May interact with IF1 in the 30S initiation complex.

With S4 and S5 plays an important role in translational accuracy. Functionally, interacts with and stabilizes bases of the 16S rRNA that are involved in tRNA selection in the A site and with the mRNA backbone. Located at the interface of the 30S and 50S subunits, it traverses the body of the 30S subunit contacting proteins on the other side and probably holding the rRNA structure together. The combined cluster of proteins S8, S12 and S17 appears to hold together the shoulder and platform of the 30S subunit. The chain is Small ribosomal subunit protein uS12 from Acholeplasma laidlawii (strain PG-8A).